The sequence spans 778 residues: Pentatricopeptide repeat-containing protein At3g09650, chloroplastic (778 aa).

The N-terminal 65 residues, 1 to 65, are a transit peptide targeting the chloroplast; sequence MNILRPPTSS…RSASGTANSS (65 aa). PPR repeat units follow at residues 235 to 269, 270 to 304, and 305 to 339; these read DTAAFNAVLNACANLGDTDKYWKLFEEMSEWDCEP, DVLTYNVMIKLCARVGRKELIVFVLERIIDKGIKV, and CMTTMHSLVAAYVGFGDLRTAERIVQAMREKRRDL. The disordered stretch occupies residues 351–381; that stretch reads LKEKEEEEAEDDEDAFEDDEDSGYSARDEVS. Residues 355–372 are compositionally biased toward acidic residues; it reads EEEEAEDDEDAFEDDEDS. PPR repeat units lie at residues 413 to 443, 451 to 485, 486 to 521, 522 to 556, 557 to 587, 593 to 627, and 628 to 658; these read DSRIYTTLMKGYMKNGRVADTARMLEAMRRQ, DEVTYTTVVSAFVNAGLMDRARQVLAEMARMGVPA, NRITYNVLLKGYCKQLQIDRAEDLLREMTEDAGIEP, DVVSYNIIIDGCILIDDSAGALAFFNEMRTRGIAP, TKISYTTLMKAFAMSGQPKLANRVFDEMMND, DLIAWNMLVEGYCRLGLIEDAQRVVSRMKENGFYP, and NVATYGSLANGVSQARKPGDALLLWKEIKER.

This sequence belongs to the PPR family. P subfamily.

Its subcellular location is the plastid. It localises to the chloroplast stroma. Involved in the processing of polycistronic chloroplast psbB-psbT-psbH-petB-petD transcript. Could bind RNA. In Arabidopsis thaliana (Mouse-ear cress), this protein is Pentatricopeptide repeat-containing protein At3g09650, chloroplastic (HCF152).